A 216-amino-acid chain; its full sequence is Somatotropin (216 aa).

The first 25 residues, 1–25, serve as a signal peptide directing secretion; that stretch reads MAPGSWFSPLLIAVVTLGLPQEAAA. His45 is a Zn(2+) binding site. Cysteines 78 and 189 form a disulfide. Zn(2+) is bound at residue Glu198. The cysteines at positions 206 and 214 are disulfide-linked.

This sequence belongs to the somatotropin/prolactin family.

The protein localises to the secreted. Its function is as follows. Growth hormone plays an important role in growth control. The chain is Somatotropin (GH) from Gallus gallus (Chicken).